Reading from the N-terminus, the 359-residue chain is MSFNTFGHMFRVTTFGESHGVALGCVVDGCPPRIPLTAAEIQRDLDRRKPGQSRFTTQRQEADQVKILSGVMETERGQVTTGTPIALMIENTDQRSKDYSDIKDKYRPGHADYTYEAKYGIRDYRGGGRSSARETAARVAAGAVARKVIPDVKVRAALVQMGPHKIDRANWNWDDVTRNPFFCPDATKAAFFEEYLDEIRKSGSSIGAVIEVVAENVPAGWGAPIYGKLDSDLAAALMSINAVKGVEIGAGFGAAELRGEDNADEMRAGNNGPVFLSNHAGGILGGISTGQAVVARFAVKPTSSILTPRKTVDRAGGETDILTKGRHDPCVGIRAVPVAEAMVACVLADHFLRHRGQNG.

Arg-48 and Arg-54 together coordinate NADP(+). FMN is bound by residues 129–131 (RSS), 241–242 (NA), Gly-285, 300–304 (KPTSS), and Arg-326.

Belongs to the chorismate synthase family. In terms of assembly, homotetramer. FMNH2 serves as cofactor.

The enzyme catalyses 5-O-(1-carboxyvinyl)-3-phosphoshikimate = chorismate + phosphate. It participates in metabolic intermediate biosynthesis; chorismate biosynthesis; chorismate from D-erythrose 4-phosphate and phosphoenolpyruvate: step 7/7. In terms of biological role, catalyzes the anti-1,4-elimination of the C-3 phosphate and the C-6 proR hydrogen from 5-enolpyruvylshikimate-3-phosphate (EPSP) to yield chorismate, which is the branch point compound that serves as the starting substrate for the three terminal pathways of aromatic amino acid biosynthesis. This reaction introduces a second double bond into the aromatic ring system. This chain is Chorismate synthase, found in Afipia carboxidovorans (strain ATCC 49405 / DSM 1227 / KCTC 32145 / OM5) (Oligotropha carboxidovorans).